A 169-amino-acid chain; its full sequence is Phosphopantetheine adenylyltransferase (169 aa).

A substrate-binding site is contributed by Ser10. Residues Ser10–Phe11 and His18 each bind ATP. Substrate contacts are provided by Lys42, Thr79, and Arg93. ATP-binding positions include Gly94–Arg96, Glu104, and Val129–Thr135.

This sequence belongs to the bacterial CoaD family. Homohexamer. Mg(2+) serves as cofactor.

The protein localises to the cytoplasm. The catalysed reaction is (R)-4'-phosphopantetheine + ATP + H(+) = 3'-dephospho-CoA + diphosphate. It participates in cofactor biosynthesis; coenzyme A biosynthesis; CoA from (R)-pantothenate: step 4/5. In terms of biological role, reversibly transfers an adenylyl group from ATP to 4'-phosphopantetheine, yielding dephospho-CoA (dPCoA) and pyrophosphate. This Rhodopseudomonas palustris (strain TIE-1) protein is Phosphopantetheine adenylyltransferase.